The following is a 507-amino-acid chain: ATP synthase subunit alpha, chloroplastic (507 aa).

170–177 lines the ATP pocket; sequence GDRQTGKT. At threonine 257 the chain carries Phosphothreonine.

The protein belongs to the ATPase alpha/beta chains family. In terms of assembly, F-type ATPases have 2 components, CF(1) - the catalytic core - and CF(0) - the membrane proton channel. CF(1) has five subunits: alpha(3), beta(3), gamma(1), delta(1), epsilon(1). CF(0) has four main subunits: a, b, b' and c.

The protein localises to the plastid. It localises to the chloroplast thylakoid membrane. The enzyme catalyses ATP + H2O + 4 H(+)(in) = ADP + phosphate + 5 H(+)(out). In terms of biological role, produces ATP from ADP in the presence of a proton gradient across the membrane. The alpha chain is a regulatory subunit. In Aethionema grandiflorum (Persian stone-cress), this protein is ATP synthase subunit alpha, chloroplastic.